A 130-amino-acid chain; its full sequence is UPF0102 protein TDE_2303 (130 aa).

This sequence belongs to the UPF0102 family.

This chain is UPF0102 protein TDE_2303, found in Treponema denticola (strain ATCC 35405 / DSM 14222 / CIP 103919 / JCM 8153 / KCTC 15104).